The chain runs to 881 residues: MHPFYQLFRNIQSLGEEEVQELLGPPEDALPLLAGEGLNHRVADALNLQLPTADLEWIHKTNVITGLYSTQTEKFNCNWKQPVFPKIHLDNNLFQKLENYFGPLTTNEKRRLKLVFPARFFPNATKYFPLLKGIKDKYPNYTIEHFFAAANYLWTLWESGILYLRKNQTTLTFRGKPYSWEHRQLEQHNGQQHKSNIRSQQISCMVANSGNLLYTHYHRDKSSNIQTRNLSDNVFKKSKESTRVRCYTYDKIQRNRLGQLARIPCESKAPSEQQQSSLRSKGRDFRNQIQAYNSSRNKGYTTWHSTTSDSIQSGSKKKTHTSNSSFERHTPSFDNEKSDRSPAGICRGTESSNHLRSSQLCLWRSFYYTKPCGTYCLHHIVSSIDDWGPCTFDGDVTIRSPRTPRRITGGIFLVDKNPYNSSESRLVVDFSQFSRGHSRVHWPKFAVPNLQTLANLLSTNLQWLSLDVSAAFYHIPVSPAAVPHFLVGSPGLERFASCMSHDASNRNNSKLQTMHHICSRHLYNTLLLLFKTYGRKLHLLAHPFIMGFRKLPMGVGLSPFLLAQFTSALTSMVRRNFPHCLAFAYMDDLVLGARSYEHLTAVYSHICSVFLDLGIHLNVEKTKWWGHTLHFMGYTINGAGVLPQDKHVHKVTTYLKSIPINQPLDYKICERLTGILNYVAPFTKCGYAALLPLYQAIASHTAFVFSSLYKNWLLSLYGELWPVARQRGVVCSVFADATPTGWGICTTCQLISGTFGFSLPIATAELIAACLARCWTGARLLGTDNSVVLSGKLTSFPWLLACVANWILRGTSFCYVPSADNPADLPSRGLLPALRPLPLLRFRPVTKRISLWAASPPVSTRRPVRVAWASPVQTCEPWIPP.

A terminal protein domain (TP) region spans residues 1 to 184 (MHPFYQLFRN…GKPYSWEHRQ (184 aa)). Residues 185-384 (LEQHNGQQHK…YCLHHIVSSI (200 aa)) form a spacer region. Residues 263 to 351 (IPCESKAPSE…PAGICRGTES (89 aa)) form a disordered region. 2 stretches are compositionally biased toward polar residues: residues 270 to 279 (PSEQQQSSLR) and 287 to 314 (NQIQAYNSSRNKGYTTWHSTTSDSIQSG). The segment covering 326–340 (FERHTPSFDNEKSDR) has biased composition (basic and acidic residues). The interval 385–726 (DDWGPCTFDG…YGELWPVARQ (342 aa)) is polymerase/reverse transcriptase domain (RT). The region spanning 395-636 (DVTIRSPRTP…HTLHFMGYTI (242 aa)) is the Reverse transcriptase domain. Positions 467, 587, and 588 each coordinate Mg(2+).

This sequence belongs to the hepadnaviridae P protein family.

The catalysed reaction is DNA(n) + a 2'-deoxyribonucleoside 5'-triphosphate = DNA(n+1) + diphosphate. It carries out the reaction Endonucleolytic cleavage to 5'-phosphomonoester.. Activated by host HSP70 and HSP40 in vitro to be able to bind the epsilon loop of the pgRNA. Because deletion of the RNase H region renders the protein partly chaperone-independent, the chaperones may be needed indirectly to relieve occlusion of the RNA-binding site by this domain. Inhibited by several reverse-transcriptase inhibitors: Lamivudine, Adefovir and Entecavir. In terms of biological role, multifunctional enzyme that converts the viral RNA genome into dsDNA in viral cytoplasmic capsids. This enzyme displays a DNA polymerase activity that can copy either DNA or RNA templates, and a ribonuclease H (RNase H) activity that cleaves the RNA strand of RNA-DNA heteroduplexes in a partially processive 3'- to 5'-endonucleasic mode. Neo-synthesized pregenomic RNA (pgRNA) are encapsidated together with the P protein, and reverse-transcribed inside the nucleocapsid. Initiation of reverse-transcription occurs first by binding the epsilon loop on the pgRNA genome, and is initiated by protein priming, thereby the 5'-end of (-)DNA is covalently linked to P protein. Partial (+)DNA is synthesized from the (-)DNA template and generates the relaxed circular DNA (RC-DNA) genome. After budding and infection, the RC-DNA migrates in the nucleus, and is converted into a plasmid-like covalently closed circular DNA (cccDNA). The activity of P protein does not seem to be necessary for cccDNA generation, and is presumably released from (+)DNA by host nuclear DNA repair machinery. The protein is Protein P of Ground squirrel hepatitis virus (strain 27) (GSHV).